We begin with the raw amino-acid sequence, 463 residues long: L-seryl-tRNA(Sec) selenium transferase (463 aa).

N6-(pyridoxal phosphate)lysine is present on Lys295.

This sequence belongs to the SelA family. Homodecamer; pentamer of dimers. Binds only one seryl-tRNA(Sec) per dimer. Requires pyridoxal 5'-phosphate as cofactor.

Its subcellular location is the cytoplasm. The catalysed reaction is L-seryl-tRNA(Sec) + selenophosphate + H(+) = L-selenocysteinyl-tRNA(Sec) + phosphate. It functions in the pathway aminoacyl-tRNA biosynthesis; selenocysteinyl-tRNA(Sec) biosynthesis; selenocysteinyl-tRNA(Sec) from L-seryl-tRNA(Sec) (bacterial route): step 1/1. In terms of biological role, converts seryl-tRNA(Sec) to selenocysteinyl-tRNA(Sec) required for selenoprotein biosynthesis. The polypeptide is L-seryl-tRNA(Sec) selenium transferase (Escherichia coli O7:K1 (strain IAI39 / ExPEC)).